We begin with the raw amino-acid sequence, 318 residues long: D-alanine--D-alanine ligase (318 aa).

One can recognise an ATP-grasp domain in the interval 117 to 315 (KQVWLSLGLS…FETLVWRVLE (199 aa)). 146 to 201 (ARQIGLPIIVKPANEGSSVGVSRVFDQAQLEEAVTLAARYDGALLMEQLIEGDELT) is a binding site for ATP. 3 residues coordinate Mg(2+): Asp-268, Glu-282, and Asn-284.

It belongs to the D-alanine--D-alanine ligase family. The cofactor is Mg(2+). It depends on Mn(2+) as a cofactor.

The protein resides in the cytoplasm. It catalyses the reaction 2 D-alanine + ATP = D-alanyl-D-alanine + ADP + phosphate + H(+). It participates in cell wall biogenesis; peptidoglycan biosynthesis. In terms of biological role, cell wall formation. This is D-alanine--D-alanine ligase from Xanthomonas axonopodis pv. citri (strain 306).